A 472-amino-acid polypeptide reads, in one-letter code: Cysteine--tRNA ligase (472 aa).

Zn(2+) is bound at residue cysteine 28. The short motif at 30–40 (PTVYNYIHIGN) is the 'HIGH' region element. Zn(2+) is bound by residues cysteine 212, histidine 237, and glutamate 241. Residues 271 to 275 (KMSKS) carry the 'KMSKS' region motif. Lysine 274 contacts ATP.

Belongs to the class-I aminoacyl-tRNA synthetase family. As to quaternary structure, monomer. Zn(2+) serves as cofactor.

Its subcellular location is the cytoplasm. The enzyme catalyses tRNA(Cys) + L-cysteine + ATP = L-cysteinyl-tRNA(Cys) + AMP + diphosphate. In Limosilactobacillus fermentum (strain NBRC 3956 / LMG 18251) (Lactobacillus fermentum), this protein is Cysteine--tRNA ligase.